A 2429-amino-acid polypeptide reads, in one-letter code: Highly reducing polyketide synthase acrA (2429 aa).

One can recognise a Ketosynthase family 3 (KS3) domain in the interval Pro4–Ser436. Catalysis depends on for beta-ketoacyl synthase activity residues Cys177, His314, and His356. Residues Val541 to Gln861 form a malonyl-CoA:ACP transacylase (MAT) domain region. Residues His931 to Ala1068 form an N-terminal hotdog fold region. The dehydratase (DH) domain stretch occupies residues His931–Pro1229. The PKS/mFAS DH domain maps to His931–Arg1230. His963 serves as the catalytic Proton acceptor; for dehydratase activity. A C-terminal hotdog fold region spans residues Val1082 to Arg1230. Catalysis depends on Asp1141, which acts as the Proton donor; for dehydratase activity. Positions Asn1388–Tyr1577 are methyltransferase (MT) domain. Residues Thr2065 to His2235 form a ketoreductase (KR) domain region. Residues Glu2351–Val2428 form the Carrier domain. Residue Ser2388 is modified to O-(pantetheine 4'-phosphoryl)serine.

It functions in the pathway secondary metabolite biosynthesis. Functionally, highly reducing polyketide synthase; part of the cluster that mediates the biosynthesis of acurin A, a highly reduced polyketide coupled to a serine via a peptide bond. The activities of the highly reducing polyketide synthase acrA and the nonribosomal peptide synthetase acrB are collectively responsible for the synthesis of the acurin A core structure with a heptaketide backbone produced by acrA covalently fused to a L-serine by acrB. After the formation of the PK-NRP hybrid product, it is detached from acrB by reductive release to set up the formation of the lactam ring by aldol condensation. The hydrolyase acrC then catalyzes water loss to generate a double bond in the ring. This double bond is probably reduced, which is followed by three oxidations at C-22 to generate the carboxylic acid moiety, involving probably the FAD-binding monooxygenase acrE and the cytochrome P450 monooxygenases acrD and acrF. Finally, a last methylation step performed by the O-methyltransferase acrG leads to the production of acurin A. The sequence is that of Highly reducing polyketide synthase acrA from Aspergillus aculeatus (strain ATCC 16872 / CBS 172.66 / WB 5094).